The primary structure comprises 554 residues: Eukaryotic translation initiation factor 3 subunit D-2 (554 aa).

The segment at 116 to 149 is disordered; the sequence is RGNAAIGGGQGGAGGTGGAGVGNKYGKGRDMRRG. A compositionally biased stretch (gly residues) spans 120-140; that stretch reads AIGGGQGGAGGTGGAGVGNKY. An RNA gate region spans residues 291 to 305; that stretch reads QFDLLTVNETALEPP. A disordered region spans residues 532 to 554; the sequence is FDSDGNDDEETSDDRPFLKSLGN.

The protein belongs to the eIF-3 subunit D family. As to quaternary structure, component of the eukaryotic translation initiation factor 3 (eIF-3) complex. The eIF-3 complex interacts with pix.

The protein resides in the cytoplasm. In terms of biological role, mRNA cap-binding component of the eukaryotic translation initiation factor 3 (eIF-3) complex, which is involved in protein synthesis of a specialized repertoire of mRNAs and, together with other initiation factors, stimulates binding of mRNA and methionyl-tRNAi to the 40S ribosome. The eIF-3 complex specifically targets and initiates translation of a subset of mRNAs involved in cell proliferation. In the eIF-3 complex, eif3d specifically recognizes and binds the 7-methylguanosine cap of a subset of mRNAs. This is Eukaryotic translation initiation factor 3 subunit D-2 from Drosophila virilis (Fruit fly).